Reading from the N-terminus, the 282-residue chain is tRNA pseudouridine synthase A (282 aa).

Asp61 (nucleophile) is an active-site residue. Substrate is bound at residue Tyr119.

Belongs to the tRNA pseudouridine synthase TruA family. As to quaternary structure, homodimer.

The enzyme catalyses uridine(38/39/40) in tRNA = pseudouridine(38/39/40) in tRNA. Its function is as follows. Formation of pseudouridine at positions 38, 39 and 40 in the anticodon stem and loop of transfer RNAs. This Nostoc sp. (strain PCC 7120 / SAG 25.82 / UTEX 2576) protein is tRNA pseudouridine synthase A.